A 129-amino-acid polypeptide reads, in one-letter code: MYDNLKSLGINQPEDVDRYSLRQEANNDILKIYFRKDKGEFFAKSVKFKYPRQRKTVVADNAGQGYKEIHEINPNLRYVIDELDQLCQRDQVEVDLKRKILDDLRHLEGVVSHKIAEIESDLEKLTRGK.

It belongs to the UPF0325 family.

In Serratia proteamaculans (strain 568), this protein is UPF0325 protein Spro_3794.